The primary structure comprises 122 residues: Small ribosomal subunit protein uS13 (122 aa).

Residues 97–122 are disordered; the sequence is PVRGQRTKTNARTRKGPARTVAGKKK.

Belongs to the universal ribosomal protein uS13 family. In terms of assembly, part of the 30S ribosomal subunit. Forms a loose heterodimer with protein S19. Forms two bridges to the 50S subunit in the 70S ribosome.

Located at the top of the head of the 30S subunit, it contacts several helices of the 16S rRNA. In the 70S ribosome it contacts the 23S rRNA (bridge B1a) and protein L5 of the 50S subunit (bridge B1b), connecting the 2 subunits; these bridges are implicated in subunit movement. Contacts the tRNAs in the A and P-sites. This Geobacter metallireducens (strain ATCC 53774 / DSM 7210 / GS-15) protein is Small ribosomal subunit protein uS13.